The following is a 178-amino-acid chain: Negative modulator of initiation of replication (178 aa).

Residues 113–117 (RTRVY) are interaction with DNA.

Belongs to the SeqA family. As to quaternary structure, homodimer. Polymerizes to form helical filaments.

The protein resides in the cytoplasm. In terms of biological role, negative regulator of replication initiation, which contributes to regulation of DNA replication and ensures that replication initiation occurs exactly once per chromosome per cell cycle. Binds to pairs of hemimethylated GATC sequences in the oriC region, thus preventing assembly of replication proteins and re-initiation at newly replicated origins. Repression is relieved when the region becomes fully methylated. The polypeptide is Negative modulator of initiation of replication (Photobacterium profundum (strain SS9)).